A 202-amino-acid chain; its full sequence is Histone chaperone ASF1B (202 aa).

The tract at residues 1–155 is interaction with CHAF1B; it reads MAKVSVLNVA…VTRFHINWDN (155 aa). Positions 1–156 are interaction with histone H3; that stretch reads MAKVSVLNVA…TRFHINWDNN (156 aa). Ser-198 is subject to Phosphoserine; by TLK2.

Belongs to the ASF1 family. In terms of assembly, interacts with histone H3 (via C-terminus), including histone H3.1, H3.2 and H3.3, and histone H4; the interaction with H3 is direct. Interacts with the CHAF1A, CHAF1B and RBBP4 subunits of the CAF-1 complex. Interacts with HAT1, NASP and TAF1. Found in a soluble complex with NASP and histones H3 and H4; the interaction with NASP is probably indirect and mediated by H3-H4. Interacts with CDAN1. Found in a cytosolic complex with IPO4 and histones H3 and H4. Interacts with CREBBP. In terms of processing, phosphorylated by TLK1 and TLK2. In terms of tissue distribution, highly expressed in testis and at lower levels in colon, small intestine and thymus.

It localises to the nucleus. The protein localises to the cytoplasm. The protein resides in the cytosol. In terms of biological role, histone chaperone that facilitates histone deposition and histone exchange and removal during nucleosome assembly and disassembly. Cooperates with chromatin assembly factor 1 (CAF-1) to promote replication-dependent chromatin assembly. Also involved in the nuclear import of the histone H3-H4 dimer together with importin-4 (IPO4): specifically recognizes and binds newly synthesized histones with the monomethylation of H3 'Lys-9' (H3K9me1) and diacetylation at 'Lys-5' and 'Lys-12' of H4 (H4K5K12ac) marks in the cytosol. Does not participate in replication-independent nucleosome deposition which is mediated by ASF1A and HIRA. Required for gonad development. The polypeptide is Histone chaperone ASF1B (Homo sapiens (Human)).